The sequence spans 655 residues: FYVE, RhoGEF and PH domain-containing protein 2 (655 aa).

Phosphoserine occurs at positions 10, 39, and 47. Disordered stretches follow at residues 21 to 52 (NRTP…EPWE) and 84 to 103 (WRRS…EPEE). Residues 32–41 (SLEDQPHSPE) are compositionally biased toward basic and acidic residues. A DH domain is found at 102-290 (EEKRVVRELL…FSAAQHSNAA (189 aa)). One can recognise a PH 1 domain in the interval 319-418 (TLLREGPVLK…WMQACQAAID (100 aa)). An FYVE-type zinc finger spans residues 458 to 518 (DKMVTMCMRC…VCLTCYTFLT (61 aa)). Residues C464, C467, C481, C484, C489, C492, C510, and C513 each coordinate Zn(2+). The PH 2 domain occupies 544-641 (QSLVCSFLQL…WVTAIKRAAS (98 aa)). Residue T644 is modified to Phosphothreonine. S654 carries the phosphoserine modification.

Lymph node, spleen, B-lymphocytes and macrophages (at protein level). Expressed at high levels in lymph node, spleen, B-lymphocytes and bone marrow macrophages. Expressed at lower levels in mature bone marrow dendritic cells. In both immature and mature B-cells, expression is down-regulated by prior B-cell receptor signaling. Expression remains high in resting B and memory cells but declines upon differentiation into plasma cells.

The protein resides in the cytoplasm. It localises to the nucleus. Its subcellular location is the early endosome. It is found in the early endosome membrane. The protein localises to the cell projection. The protein resides in the ruffle membrane. It localises to the cytoskeleton. Activates CDC42, a member of the Ras-like family of Rho- and Rac proteins, by exchanging bound GDP for free GTP. Activates JNK1 via CDC42 but not RAC1. Binds to phosphatidylinositol 4,5-bisphosphate, phosphatidylinositol 3,4,5-trisphosphate, phosphatidylinositol 5-monophosphate, phosphatidylinositol 4-monophosphate and phosphatidylinositol 3-monophosphate. This Mus musculus (Mouse) protein is FYVE, RhoGEF and PH domain-containing protein 2 (Fgd2).